Consider the following 845-residue polypeptide: Beta-mannosidase B (845 aa).

The N-linked (GlcNAc...) asparagine glycan is linked to N252. Residue E432 is the Proton donor of the active site. N717 and N723 each carry an N-linked (GlcNAc...) asparagine glycan.

It belongs to the glycosyl hydrolase 2 family. Beta-mannosidase B subfamily.

The enzyme catalyses Hydrolysis of terminal, non-reducing beta-D-mannose residues in beta-D-mannosides.. It participates in glycan metabolism; N-glycan degradation. Exoglycosidase that cleaves the single beta-linked mannose residue from the non-reducing end of beta-mannosidic oligosaccharides of various complexity and length. Prefers mannobiose over mannotriose and has no activity against polymeric mannan. Is also severely restricted by galactosyl substitutions at the +1 subsite. In Aspergillus fumigatus (strain ATCC MYA-4609 / CBS 101355 / FGSC A1100 / Af293) (Neosartorya fumigata), this protein is Beta-mannosidase B (mndB).